A 56-amino-acid polypeptide reads, in one-letter code: Large ribosomal subunit protein bL32c (56 aa).

It belongs to the bacterial ribosomal protein bL32 family.

The protein localises to the plastid. It localises to the chloroplast. This chain is Large ribosomal subunit protein bL32c, found in Tupiella akineta (Green alga).